We begin with the raw amino-acid sequence, 794 residues long: Ent-kaurene synthase 1, chloroplastic (794 aa).

A chloroplast-targeting transit peptide spans 1-28 (MSLLLSNSVLVGPKFRSSRISHASASLD). Positions 543, 547, 687, and 695 each coordinate Mg(2+). The DDXXD motif motif lies at 543 to 547 (DDFFD).

This sequence belongs to the terpene synthase family. It depends on Mg(2+) as a cofactor. As to expression, accumulates in leaves, and, at low levels, in germinating seeds.

Its subcellular location is the plastid. The protein resides in the chloroplast. It carries out the reaction ent-copalyl diphosphate = ent-kaur-16-ene + diphosphate. Its pathway is secondary metabolite biosynthesis; terpenoid biosynthesis. It participates in plant hormone biosynthesis; gibberellin biosynthesis. Involved in the biosynthesis of ent-kaurene diterpenoids natural products such as oridonin, miltiradiene, eriocalyxin B and nezukol, known to exhibit antitumor, anti-inflammatory and antibacterial activities, and in the production of gibberellins phytohormones. Catalyzes the conversion of ent-copalyl diphosphate (ent-CPP) to ent-kaurene. This is Ent-kaurene synthase 1, chloroplastic from Isodon eriocalyx (Plectranthus eriocalyx).